The chain runs to 642 residues: Threonine--tRNA ligase (642 aa).

The 61-residue stretch at 1–61 (MPVITLPDGS…ETDSELSIIT (61 aa)) folds into the TGS domain. The segment at 243-534 (DHRKIGKQLD…LIEEYAGKFP (292 aa)) is catalytic. 3 residues coordinate Zn(2+): C334, H385, and H511.

Belongs to the class-II aminoacyl-tRNA synthetase family. Homodimer. It depends on Zn(2+) as a cofactor.

It is found in the cytoplasm. The catalysed reaction is tRNA(Thr) + L-threonine + ATP = L-threonyl-tRNA(Thr) + AMP + diphosphate + H(+). Functionally, catalyzes the attachment of threonine to tRNA(Thr) in a two-step reaction: L-threonine is first activated by ATP to form Thr-AMP and then transferred to the acceptor end of tRNA(Thr). Also edits incorrectly charged L-seryl-tRNA(Thr). The protein is Threonine--tRNA ligase of Shewanella halifaxensis (strain HAW-EB4).